Reading from the N-terminus, the 44-residue chain is 2S seed storage albumin protein (44 aa).

2 disulfide bridges follow: Cys7–Cys42 and Cys19–Cys31.

This sequence belongs to the 2S seed storage albumins family. The mature protein consists of a small and a large chain linked by 2 disulfide bonds.

Functionally, this is a 2S seed storage protein. Has antifungal activity. Inhibits spore germination in H.sativum (IC(50)=62.5 ug/ml) and P.betae (IC(50)=62.5 ug/ml). Inhibits growth of H.sativum, V.albo-atrum and P.infestans. This is 2S seed storage albumin protein from Taraxacum officinale (Common dandelion).